A 169-amino-acid polypeptide reads, in one-letter code: NADH-quinone oxidoreductase subunit B (169 aa).

4 residues coordinate [4Fe-4S] cluster: C45, C46, C111, and C141.

It belongs to the complex I 20 kDa subunit family. In terms of assembly, NDH-1 is composed of 14 different subunits. Subunits NuoB, C, D, E, F, and G constitute the peripheral sector of the complex. [4Fe-4S] cluster serves as cofactor.

It localises to the cell membrane. It carries out the reaction a quinone + NADH + 5 H(+)(in) = a quinol + NAD(+) + 4 H(+)(out). In terms of biological role, NDH-1 shuttles electrons from NADH, via FMN and iron-sulfur (Fe-S) centers, to quinones in the respiratory chain. The immediate electron acceptor for the enzyme in this species is believed to be a menaquinone. Couples the redox reaction to proton translocation (for every two electrons transferred, four hydrogen ions are translocated across the cytoplasmic membrane), and thus conserves the redox energy in a proton gradient. This is NADH-quinone oxidoreductase subunit B from Clostridium beijerinckii (strain ATCC 51743 / NCIMB 8052) (Clostridium acetobutylicum).